Here is a 2095-residue protein sequence, read N- to C-terminus: MSDTPSTSFSMIHLTSEGQVPSPRHSNITHPVVAKRISFYKSGDPQFGGVRVVVNPRSFKTFDALLDSLSRKVPLPFGVRNISTPRGRHSITRLEELEDGKSYVCSHNKKVLPVDLDKARRRPRPWLSSRSISTHVQLCPATANMSTMAPGMLRAPRRLVVFRNGDPKNKHVVLLSRRITQSFEAFLQYLTQVMQCPVAKLYATDGRKVPSLQAVILSSGAVVAAGREPFKPGNYDIQKYLLPAKLPGISHRVHQKGKAKIEKRKMSTHMPSDLRPQTDSLISEKTYDCFSDFSVAPENYLALETHESQSLSTYPSEDDVEKSIVFNQDGTMTVVMKVRFKIKEEETVKWTTTVNRAGLSNNDEKNKKSSYPGKTDYGPSSLKLEACSLPEDIVDTTQQGSLTEEENTQMTEQQALSCSSASWENASMETDIQESQKQVKHFYRPPTPGPRRMRQKKSVIGTVTVVSETEVQEKQFSYSEERKGGEKSEYHMFTHSCSKMSSVSNKLVQIGSDNEMESALERTRESGSLKSQAINAGAIEITSQKVLKMCHNNALPSTAPENSVVEEGTDNSAVSGTATIKHFRTCGNANDSFSSITADSTPTSVNNYSNDRNISELPSVGSPVLTMRLVNEFAHCGLTEKPENRKKVLSSSASKKKKKKSQQRMITSNDKKKVIETKGPPNIAGKIPRAGTTAQERLLQESDCPDKGGRVCEQGLNISPMAIESNNFFPKSNPTFSKNFYKNKLNTFQNPKTQKLLAKRKSRPRKIVSTERLRKQEIGQEDKILLHSDSKLCESHLEKQSLFHVFNILEEDQKVLHRPPFQVEKVARNLKGMAKKSLVPKVNDLHIMLRNQKKQMGVKLKSGAEVSEQHVTTRADPLASLKKPDFPEGIPHHSGKSYVKRWLQNINSYPDFEHRKSGPLCQNRSDVVNYNRNGFLGNNLHTTSSKGNGFLMESNKSKTKNDNWSGNTNQETGKSLVAKDNGEELNKHHCESQNGSLYDSYLVSLHDNCTLSQTTINEPSTKSHLSIEKSRPEVKLVYQEMNFATKRQSIEVAIQVDTMGENVLKDYLPALLLRHLEAFVPNNQKHQNGISQIPGSLAEVVFPSVIDNSSTNLLLAWLLVLNLKRTMNSFCQSDAHKMTNRPSETAALLEVLKHVAITEEADDLKAAVANLMESTKTCSGSSGREQDMLPVNCTASSLHSVDECNENGSAQKTLLDEGYSVMGDCTSEMVSKSCNSSCEMHMVSKTNPPKQVDDQSDGLLTSNSCTVSQRSTGACFLTDGVYSHEACAQKEGVYEGACLSDETHIPIRDCHTIHSVHSKENKCTDDLESTEELKTVDKVPKGLSILADSMYKNDSNVSTFQNVNKLSSQRTLLSKTYLDSDKDYSPLEEFQNCPRKKIVNKKKSISSDKEESRTSEEPRSITNSMTSSERNAISELESFEELESQDTSIFNMNVRAEKKSTKETMQKQSEARMSSELINVSGRKIIEQERRNTAILETTARGQVTPPSLAFCYDSNKNTEKEISEGETKMRVKKMVDSMENESYSESSLNFKKHHRSPGTLDWSDYGSDSESGYPCKASSNSHNDDSGQEKEPTRGIVKRAIEKLYGKAEIIKPPFFHGSIHKSQVCPYNSVEVQCAKKTNFYESECQSLVSSEQVSRSSLIFQEFPQVDANGMGDSFGDSSIENVTKSSAHDRVFTEKENGKLIDNGKWLLRENHLWRVSSDNPGMYGNADTTSVDTLIDKNSIEVPYSHFGELAPGPTMAELSSSEIEEMTQPLEVKCNYFNFPHGSDSEPFGEDFPDAQNKTCPKEKIPNHHTEEKGNYPSERLCTSVTQAFVSAGNKVHPVCSDAIKTQPLPGSNITHGALQEGDSLDKLYALCGQHCPILTVIIQPVNEESRGFAYRKDSDIENSLDFQLWMKIYPFMPQSKKHVFRSDGRNVSVGEEFAGNVIGDLCDQLYFKSMIDLVDQRANSLGKEINLKKFQLYLKKSFSDPLSTSLLVVENRNSVSLSPSSWTDNFKSIDENNNFLNRLPNSSKNPNQVVRENTNFQFHLELFGQVYLLDICQVEKPLNIKTRSKLEMYYILEGEVLFIWEEEK.

Doublecortin domains lie at 35–117 (KRIS…VDLD) and 157–236 (RRLV…GNYD). Disordered regions lie at residues 358–379 (GLSN…DYGP), 643–688 (ENRK…GKIP), 863–887 (GAEV…PDFP), 1400–1430 (NKKK…SSER), and 1572–1595 (SGYP…EPTR). The segment covering 1405 to 1419 (ISSDKEESRTSEEPR) has biased composition (basic and acidic residues). Positions 1420 to 1430 (SITNSMTSSER) are enriched in polar residues. Over residues 1583-1595 (HNDDSGQEKEPTR) the composition is skewed to basic and acidic residues.

As to quaternary structure, interacts (via the doublecortin domains) with microtubules. Interacts with RP1L1. Interacts with MAK. Expressed in the cell bodies and inner segments of photoreceptors. Not found in liver, spleen, kidney, brain, thymus, muscle, heart, lung and testis.

The protein localises to the cytoplasm. The protein resides in the cytoskeleton. It is found in the cilium axoneme. It localises to the cell projection. Its subcellular location is the cilium. The protein localises to the photoreceptor outer segment. Functionally, microtubule-associated protein regulating the stability and length of the microtubule-based axoneme of photoreceptors. Required for the differentiation of photoreceptor cells, it plays a role in the organization of the outer segment of rod and cone photoreceptors ensuring the correct orientation and higher-order stacking of outer segment disks along the photoreceptor axoneme. The sequence is that of Oxygen-regulated protein 1 (Rp1) from Mus musculus (Mouse).